The sequence spans 117 residues: Small ribosomal subunit protein eS25 (117 aa).

Residues 1 to 34 form a disordered region; the sequence is MPPKKDPKGGKAPPSKKKEGSGGGKAKKKKWSKG. Residues 25–34 show a composition bias toward basic residues; the sequence is KAKKKKWSKG.

This sequence belongs to the eukaryotic ribosomal protein eS25 family.

The chain is Small ribosomal subunit protein eS25 (rps-25) from Caenorhabditis elegans.